A 422-amino-acid polypeptide reads, in one-letter code: Alcohol dehydrogenase 4 (422 aa).

A mitochondrion-targeting transit peptide spans 1–29 (MSILRSPFRLIRSPARFFPSLFHSSCNQS). Positions 82, 114, 141, 142, 181, 182, 190, 192, 203, and 225 each coordinate NAD(+). Fe(2+)-binding residues include Asp-237, His-241, and His-306. Positions 310 and 320 each coordinate NAD(+). His-320 is a Fe(2+) binding site.

This sequence belongs to the iron-containing alcohol dehydrogenase family. The cofactor is Zn(2+).

Its subcellular location is the mitochondrion matrix. The catalysed reaction is a primary alcohol + NAD(+) = an aldehyde + NADH + H(+). The enzyme catalyses a secondary alcohol + NAD(+) = a ketone + NADH + H(+). It carries out the reaction ethanol + NAD(+) = acetaldehyde + NADH + H(+). Involved in ethanol oxidation in mitochondria. The protein is Alcohol dehydrogenase 4 (adh4) of Schizosaccharomyces pombe (strain 972 / ATCC 24843) (Fission yeast).